The chain runs to 473 residues: Photosystem II CP43 reaction center protein (473 aa).

The propeptide occupies Met-1–Glu-14. The residue at position 15 (Thr-15) is an N-acetylthreonine. Thr-15 carries the post-translational modification Phosphothreonine. A run of 5 helical transmembrane segments spans residues Leu-69–Ala-93, Leu-134–Asn-155, Lys-178–Thr-200, Lys-255–Ser-275, and Trp-291–Ala-312. Glu-367 contributes to the [CaMn4O5] cluster binding site. A helical membrane pass occupies residues Arg-447–Pro-471.

It belongs to the PsbB/PsbC family. PsbC subfamily. As to quaternary structure, PSII is composed of 1 copy each of membrane proteins PsbA, PsbB, PsbC, PsbD, PsbE, PsbF, PsbH, PsbI, PsbJ, PsbK, PsbL, PsbM, PsbT, PsbX, PsbY, PsbZ, Psb30/Ycf12, at least 3 peripheral proteins of the oxygen-evolving complex and a large number of cofactors. It forms dimeric complexes. Requires Binds multiple chlorophylls and provides some of the ligands for the Ca-4Mn-5O cluster of the oxygen-evolving complex. It may also provide a ligand for a Cl- that is required for oxygen evolution. PSII binds additional chlorophylls, carotenoids and specific lipids. as cofactor.

It is found in the plastid. The protein resides in the chloroplast thylakoid membrane. In terms of biological role, one of the components of the core complex of photosystem II (PSII). It binds chlorophyll and helps catalyze the primary light-induced photochemical processes of PSII. PSII is a light-driven water:plastoquinone oxidoreductase, using light energy to abstract electrons from H(2)O, generating O(2) and a proton gradient subsequently used for ATP formation. The chain is Photosystem II CP43 reaction center protein from Cicer arietinum (Chickpea).